We begin with the raw amino-acid sequence, 225 residues long: Type II restriction enzyme BslI subunit alpha (225 aa).

2 C4-type zinc fingers span residues 36–53 (CKDC…CYFC) and 63–84 (CNSC…TDGC).

As to quaternary structure, heterotetramer of two alpha and two beta subunits. The alpha subunit is believed to be responsible for DNA recognition, while the beta subunit is thought to mediate cleavage. Zn(2+) is required as a cofactor.

It catalyses the reaction Endonucleolytic cleavage of DNA to give specific double-stranded fragments with terminal 5'-phosphates.. A P subtype restriction enzyme that recognizes the double-stranded sequence 5'-CCN(7)GG-3' and cleaves after N-7. The chain is Type II restriction enzyme BslI subunit alpha from Bacillus sp. (strain NEB-606).